Consider the following 112-residue polypeptide: uncharacterized protein (112 aa).

This is an uncharacterized protein from Sulfolobus islandicus filamentous virus (isolate Iceland/Hveragerdi) (SIFV).